Consider the following 59-residue polypeptide: UPF0291 protein CPR_1073 (59 aa).

The interval 1–30 (MNIDELTKRINELHKKHKEEGLSEDEHKER) is disordered.

Belongs to the UPF0291 family.

The protein resides in the cytoplasm. This chain is UPF0291 protein CPR_1073, found in Clostridium perfringens (strain SM101 / Type A).